A 119-amino-acid polypeptide reads, in one-letter code: Acidic phospholipase A2 CM-II (119 aa).

Cystine bridges form between Cys11–Cys71, Cys26–Cys118, Cys28–Cys44, Cys43–Cys99, Cys50–Cys92, Cys60–Cys85, and Cys78–Cys90. Residues Phe27, Gly29, and Gly31 each contribute to the Ca(2+) site. His47 is an active-site residue. Asp48 contacts Ca(2+). Asp93 is an active-site residue.

Belongs to the phospholipase A2 family. Group I subfamily. D49 sub-subfamily. It depends on Ca(2+) as a cofactor. In terms of tissue distribution, expressed by the venom gland.

It localises to the secreted. The enzyme catalyses a 1,2-diacyl-sn-glycero-3-phosphocholine + H2O = a 1-acyl-sn-glycero-3-phosphocholine + a fatty acid + H(+). PLA2 catalyzes the calcium-dependent hydrolysis of the 2-acyl groups in 3-sn-phosphoglycerides. The chain is Acidic phospholipase A2 CM-II from Aspidelaps scutatus (Shield-nose snake).